The chain runs to 89 residues: MSLNATEKAAIVAEYAQSEGDTGSPEVQVALLTTQINHLQGHFKAHIHDHHSRRGLLRMVAQRRKLLDYLKGKNVDRYGALIGKLGLRR.

This sequence belongs to the universal ribosomal protein uS15 family. Part of the 30S ribosomal subunit. Forms a bridge to the 50S subunit in the 70S ribosome, contacting the 23S rRNA.

Functionally, one of the primary rRNA binding proteins, it binds directly to 16S rRNA where it helps nucleate assembly of the platform of the 30S subunit by binding and bridging several RNA helices of the 16S rRNA. Forms an intersubunit bridge (bridge B4) with the 23S rRNA of the 50S subunit in the ribosome. The protein is Small ribosomal subunit protein uS15 of Colwellia psychrerythraea (strain 34H / ATCC BAA-681) (Vibrio psychroerythus).